A 256-amino-acid chain; its full sequence is Small ribosomal subunit protein uS2 (256 aa).

It belongs to the universal ribosomal protein uS2 family.

The chain is Small ribosomal subunit protein uS2 from Ruegeria sp. (strain TM1040) (Silicibacter sp.).